The following is a 501-amino-acid chain: DEAD-box ATP-dependent RNA helicase 36 (501 aa).

The interval 1-68 is disordered; that stretch reads MEVDGEARPF…AAAVTEHAGD (68 aa). Over residues 36–46 the composition is skewed to pro residues; sequence EEPPNPSPSPA. A compositionally biased stretch (low complexity) spans 59 to 68; sequence AAAVTEHAGD. The short motif at 77–105 is the Q motif element; sequence STFAELGLSQWLVDVCDSLGMRVPTAVQR. The 174-residue stretch at 108–281 folds into the Helicase ATP-binding domain; the sequence is IPRALEGRDV…ELSGNNSYFF (174 aa). 121-128 serves as a coordination point for ATP; that stretch reads AETGSGKT. The DEAD box motif lies at 229 to 232; that stretch reads DEAD. One can recognise a Helicase C-terminal domain in the interval 292 to 456; sequence TLKQLYIHVP…AYDGEMRDVN (165 aa). The span at 473-486 shows a compositional bias: basic and acidic residues; it reads MADEGHEDKVQARK. Residues 473–501 are disordered; sequence MADEGHEDKVQARKEQKKRAQERKRKHDE. A coiled-coil region spans residues 475 to 501; that stretch reads DEGHEDKVQARKEQKKRAQERKRKHDE. Residues 487–501 are compositionally biased toward basic residues; sequence EQKKRAQERKRKHDE.

The protein belongs to the DEAD box helicase family. DDX49/DBP8 subfamily.

It catalyses the reaction ATP + H2O = ADP + phosphate + H(+). This chain is DEAD-box ATP-dependent RNA helicase 36, found in Oryza sativa subsp. japonica (Rice).